Reading from the N-terminus, the 478-residue chain is ATP synthase subunit beta (478 aa).

Residue 151 to 158 coordinates ATP; the sequence is GGAGVGKT.

It belongs to the ATPase alpha/beta chains family. As to quaternary structure, F-type ATPases have 2 components, CF(1) - the catalytic core - and CF(0) - the membrane proton channel. CF(1) has five subunits: alpha(3), beta(3), gamma(1), delta(1), epsilon(1). CF(0) has three main subunits: a(1), b(2) and c(9-12). The alpha and beta chains form an alternating ring which encloses part of the gamma chain. CF(1) is attached to CF(0) by a central stalk formed by the gamma and epsilon chains, while a peripheral stalk is formed by the delta and b chains.

The protein resides in the cell inner membrane. It catalyses the reaction ATP + H2O + 4 H(+)(in) = ADP + phosphate + 5 H(+)(out). Functionally, produces ATP from ADP in the presence of a proton gradient across the membrane. The catalytic sites are hosted primarily by the beta subunits. The protein is ATP synthase subunit beta of Azorhizobium caulinodans (strain ATCC 43989 / DSM 5975 / JCM 20966 / LMG 6465 / NBRC 14845 / NCIMB 13405 / ORS 571).